The primary structure comprises 156 residues: Small ribosomal subunit protein uS7 (156 aa).

It belongs to the universal ribosomal protein uS7 family. As to quaternary structure, part of the 30S ribosomal subunit. Contacts proteins S9 and S11.

Its function is as follows. One of the primary rRNA binding proteins, it binds directly to 16S rRNA where it nucleates assembly of the head domain of the 30S subunit. Is located at the subunit interface close to the decoding center, probably blocks exit of the E-site tRNA. This Shewanella piezotolerans (strain WP3 / JCM 13877) protein is Small ribosomal subunit protein uS7.